We begin with the raw amino-acid sequence, 715 residues long: Palmitoyltransferase ZDHHC5 (715 aa).

Residues 1 to 13 (MPAESGKRFKPSK) lie on the Cytoplasmic side of the membrane. Residues 14–34 (YVPVSAAAIFLVGATTLFFAF) traverse the membrane as a helical segment. The Extracellular segment spans residues 35–52 (TCPGLSLDVSPAVPIYNA). A helical membrane pass occupies residues 53 to 73 (IMFLFVLANFSMATFMDPGIF). Residues 74-148 (PRAEEDEDKE…NCIGRRNYRY (75 aa)) are Cytoplasmic-facing. Tyr91 is subject to Phosphotyrosine. The DHHC domain occupies 104 to 154 (KWCATCRFYRPPRCSHCSVCDNCVEEFDHHCPWVNNCIGRRNYRYFFLFLL). The active-site S-palmitoyl cysteine intermediate is Cys134. A helical transmembrane segment spans residues 149–169 (FFLFLLSLTAHIMGVFGFGLL). Over 170–191 (YVLCHIEELSGVRTAVTMAVMC) the chain is Extracellular. Residues 192-212 (VAGLFFIPVAGLTGFHVVLVA) form a helical membrane-spanning segment. At 213–715 (RGRTTNEQVT…VGGTTYEISV (503 aa)) the chain is on the cytoplasmic side. Ser247 carries the post-translational modification Phosphoserine. The segment at 289–715 (GELRRTKSKG…VGGTTYEISV (427 aa)) is disordered. A Phosphothreonine modification is found at Thr294. 2 positions are modified to phosphoserine: Ser296 and Ser299. Residue Thr303 is modified to Phosphothreonine. Phosphoserine is present on Ser345. Thr348 and Thr350 each carry phosphothreonine. Low complexity predominate over residues 359–373 (SSSSTSAAMPHSSSA). Ser380, Ser398, Ser406, and Ser409 each carry phosphoserine. At Thr411 the chain carries Phosphothreonine. A phosphoserine mark is found at Ser415, Ser425, Ser429, and Ser432. The span at 422 to 432 (SSGSRSSSLKS) shows a compositional bias: low complexity. Thr436 is modified (phosphothreonine). Residues 442–478 (QLQSIRSEGTTSTSYKSLANQTRNGSLSYDSLLTPSD) are compositionally biased toward polar residues. Residues Ser529 and Ser554 each carry the phosphoserine modification. Residues 581 to 597 (PRTSSSSDDSKRSPLSK) show a composition bias toward low complexity. An Omega-N-methylarginine modification is found at Arg617. Ser621 is subject to Phosphoserine. Thr659 carries the phosphothreonine modification. Polar residues predominate over residues 666-677 (LKTTYSKSNGQP). Residues Ser684 and Ser694 each carry the phosphoserine modification. An Omega-N-methylarginine modification is found at Arg697.

It belongs to the DHHC palmitoyltransferase family. ERF2/ZDHHC9 subfamily. Post-translationally, autopalmitoylated. Palmitoylation of the C-terminal tail regulates stimulation-dependent plasma membrane motility. In terms of processing, phosphorylation regulates association with endocytic proteins and its subcellular localization. Phosphorylation by LYN during fatty acid uptake leads to inactivation of the activity.

It localises to the cell membrane. The catalysed reaction is L-cysteinyl-[protein] + hexadecanoyl-CoA = S-hexadecanoyl-L-cysteinyl-[protein] + CoA. In terms of biological role, palmitoyltransferase that catalyzes the addition of palmitate onto various protein substrates such as CTNND2, CD36, GSDMD, NLRP3, NOD1, NOD2, STAT3 and S1PR1 thus plays a role in various biological processes including cell adhesion, inflammation, fatty acid uptake, bacterial sensing or cardiac functions. Plays an important role in the regulation of synapse efficacy by mediating palmitoylation of delta-catenin/CTNND2, thereby increasing synaptic delivery and surface stabilization of alpha-amino-3-hydroxy-5-methyl-4-isoxazole propionic acid receptors (AMPARs). Under basal conditions, remains at the synaptic membrane through FYN-mediated phosphorylation that prevents association with endocytic proteins. Neuronal activity enhances the internalization and trafficking of DHHC5 from spines to dendritic shafts where it palmitoylates delta-catenin/CTNND2. Regulates cell adhesion at the plasma membrane by palmitoylating GOLGA7B and DSG2. Plays a role in innate immune response by mediating the palmitoylation of NOD1 and NOD2 and their proper recruitment to the bacterial entry site and phagosomes. Also participates in fatty acid uptake by palmitoylating CD36 and thereby targeting it to the plasma membrane. Upon binding of fatty acids to CD36, gets phosphorylated by LYN leading to inactivation and subsequent CD36 caveolar endocytosis. Controls oligodendrocyte development by catalyzing STAT3 palmitoylation. Acts as a regulator of inflammatory response by mediating palmitoylation of NLRP3 and GSDMD. Palmitoylates NLRP3 to promote inflammasome assembly and activation. Activates pyroptosis by catalyzing palmitoylation of gasdermin-D (GSDMD), thereby promoting membrane translocation and pore formation of GSDMD. In Rattus norvegicus (Rat), this protein is Palmitoyltransferase ZDHHC5 (Zdhhc5).